Consider the following 126-residue polypeptide: Large ribosomal subunit protein bL12 (126 aa).

This sequence belongs to the bacterial ribosomal protein bL12 family. In terms of assembly, homodimer. Part of the ribosomal stalk of the 50S ribosomal subunit. Forms a multimeric L10(L12)X complex, where L10 forms an elongated spine to which 2 to 4 L12 dimers bind in a sequential fashion. Binds GTP-bound translation factors.

Functionally, forms part of the ribosomal stalk which helps the ribosome interact with GTP-bound translation factors. Is thus essential for accurate translation. This is Large ribosomal subunit protein bL12 from Trichlorobacter lovleyi (strain ATCC BAA-1151 / DSM 17278 / SZ) (Geobacter lovleyi).